The sequence spans 1082 residues: RNA-directed RNA polymerase (1082 aa).

The RdRp catalytic domain maps to 498-670 (LSYGDVTRYL…ALASLTGCEI (173 aa)).

This sequence belongs to the reoviridae RNA-directed RNA polymerase family. In terms of assembly, interacts with VP3 (Potential). Interacts with VP2; this interaction activates VP1. Interacts with NSP5; this interaction is probably necessary for the formation of functional virus factories. Interacts with NSP2; this interaction is weak. Requires Mg(2+) as cofactor.

The protein resides in the virion. The catalysed reaction is RNA(n) + a ribonucleoside 5'-triphosphate = RNA(n+1) + diphosphate. In terms of biological role, RNA-directed RNA polymerase that is involved in both transcription and genome replication. Together with VP3 capping enzyme, forms an enzyme complex positioned near the channels situated at each of the five-fold vertices of the core. Following infection, the outermost layer of the virus is lost, leaving a double-layered particle (DLP) made up of the core and VP6 shell. VP1 then catalyzes the transcription of fully conservative plus-strand genomic RNAs that are extruded through the DLP's channels into the cytoplasm where they function as mRNAs for translation of viral proteins. One copy of each of the viral (+)RNAs is also recruited during core assembly, together with newly synthesized polymerase complexes and VP2. The polymerase of these novo-formed particles catalyzes the synthesis of complementary minus-strands leading to dsDNA formation. To do so, the polymerase specifically recognizes conserved 3' sequence(s) in plus-strand RNA templates. Once dsRNA synthesis is complete, the polymerase switches to the transcriptional mode, thus providing secondary transcription. The sequence is that of RNA-directed RNA polymerase from Rotavirus C (strain RVC/Pig/United States/Cowden/1980) (RV-C).